A 272-amino-acid polypeptide reads, in one-letter code: Tumor necrosis factor receptor superfamily member 4 (272 aa).

The first 19 residues, 1-19 (MYVWVQQPTALLLLALTLG), serve as a signal peptide directing secretion. Topologically, residues 20–211 (VTARRLNCVK…PPTLVTPEGP (192 aa)) are extracellular. 2 TNFR-Cys repeats span residues 26–61 (NCVK…TLCH) and 62–103 (PCET…DTVC). Intrachain disulfides connect Cys-27–Cys-38, Cys-39–Cys-52, Cys-42–Cys-60, Cys-63–Cys-77, Cys-80–Cys-95, Cys-83–Cys-103, Cys-105–Cys-123, and Cys-126–Cys-139. The TNFR-Cys 3; truncated repeat unit spans residues 104–124 (RCRPGTQPRQDSGYKLGVDCV). The stretch at 125–165 (PCPPGHFSPGNNQACKPWTNCTLSGKQTRHPASDSLDAVCE) is one TNFR-Cys 4 repeat. An N-linked (GlcNAc...) asparagine glycan is attached at Asn-144. Cys-145 and Cys-164 are oxidised to a cystine. A helical membrane pass occupies residues 212–236 (AFAVLLGLGLGLLAPLTVLLALYLL). The Cytoplasmic portion of the chain corresponds to 237 to 272 (RKAWRLPNTPKPCWGNSFRTPIQEEHTDAHFTLAKI).

Interacts with TRAF2, TRAF3 and TRAF5. Expressed in CD4(+) T-cells and in T-helper Th17 cells (at protein level).

The protein resides in the membrane. Functionally, receptor for TNFSF4/OX40L/GP34. Is a costimulatory molecule implicated in long-term T-cell immunity. The protein is Tumor necrosis factor receptor superfamily member 4 (Tnfrsf4) of Mus musculus (Mouse).